The primary structure comprises 295 residues: Protoheme IX farnesyltransferase 2 (295 aa).

The next 9 helical transmembrane spans lie at Ile-9–Ala-29, Leu-36–Phe-56, Leu-80–Leu-100, Leu-108–Leu-128, Gly-135–Thr-155, Leu-163–Phe-183, Ile-209–Ala-229, Gly-230–Thr-250, and Phe-265–Val-285.

It belongs to the UbiA prenyltransferase family. Protoheme IX farnesyltransferase subfamily.

The protein resides in the cell inner membrane. It carries out the reaction heme b + (2E,6E)-farnesyl diphosphate + H2O = Fe(II)-heme o + diphosphate. It functions in the pathway porphyrin-containing compound metabolism; heme O biosynthesis; heme O from protoheme: step 1/1. Converts heme B (protoheme IX) to heme O by substitution of the vinyl group on carbon 2 of heme B porphyrin ring with a hydroxyethyl farnesyl side group. The polypeptide is Protoheme IX farnesyltransferase 2 (Pseudomonas fluorescens (strain Pf0-1)).